The following is a 457-amino-acid chain: Multidrug resistance protein MdtK (457 aa).

The next 12 membrane-spanning stretches (helical) occupy residues 11 to 31, 53 to 73, 93 to 113, 127 to 147, 160 to 180, 188 to 208, 243 to 263, 280 to 300, 316 to 336, 357 to 377, 387 to 407, and 418 to 438; these read LLAL…MGVV, IWLP…PIIA, WLAI…KFLI, AVGF…YQVL, GMVI…IFIY, LGGV…FLLM, LPIA…ALLI, FSSL…IRVG, YTGI…SIIL, LMLF…GAGV, IFYI…YILG, and PQGF…MIFA.

It belongs to the multi antimicrobial extrusion (MATE) (TC 2.A.66.1) family. MdtK subfamily.

Its subcellular location is the cell inner membrane. Multidrug efflux pump that functions probably as a Na(+)/drug antiporter. The chain is Multidrug resistance protein MdtK from Photorhabdus laumondii subsp. laumondii (strain DSM 15139 / CIP 105565 / TT01) (Photorhabdus luminescens subsp. laumondii).